We begin with the raw amino-acid sequence, 550 residues long: Arginine--tRNA ligase (550 aa).

A 'HIGH' region motif is present at residues 130-140 (ANPTGPIHIGG).

The protein belongs to the class-I aminoacyl-tRNA synthetase family. Monomer.

The protein resides in the cytoplasm. It carries out the reaction tRNA(Arg) + L-arginine + ATP = L-arginyl-tRNA(Arg) + AMP + diphosphate. The protein is Arginine--tRNA ligase (argS) of Mycobacterium tuberculosis (strain CDC 1551 / Oshkosh).